The sequence spans 197 residues: dITP/XTP pyrophosphatase (197 aa).

8–13 is a substrate binding site; sequence TGNPGK. Mg(2+)-binding residues include E40 and D69. D69 acts as the Proton acceptor in catalysis. Substrate contacts are provided by residues S70, 154–157, K177, and 182–183; these read FGYD and HR.

The protein belongs to the HAM1 NTPase family. In terms of assembly, homodimer. The cofactor is Mg(2+).

It carries out the reaction XTP + H2O = XMP + diphosphate + H(+). The enzyme catalyses dITP + H2O = dIMP + diphosphate + H(+). The catalysed reaction is ITP + H2O = IMP + diphosphate + H(+). Its function is as follows. Pyrophosphatase that catalyzes the hydrolysis of nucleoside triphosphates to their monophosphate derivatives, with a high preference for the non-canonical purine nucleotides XTP (xanthosine triphosphate), dITP (deoxyinosine triphosphate) and ITP. Seems to function as a house-cleaning enzyme that removes non-canonical purine nucleotides from the nucleotide pool, thus preventing their incorporation into DNA/RNA and avoiding chromosomal lesions. This is dITP/XTP pyrophosphatase from Photorhabdus laumondii subsp. laumondii (strain DSM 15139 / CIP 105565 / TT01) (Photorhabdus luminescens subsp. laumondii).